A 72-amino-acid chain; its full sequence is DNA-directed RNA polymerase subunit Rpo10 (72 aa).

Residues C7, C10, C53, and C54 each coordinate Zn(2+).

The protein belongs to the archaeal Rpo10/eukaryotic RPB10 RNA polymerase subunit family. As to quaternary structure, part of the RNA polymerase complex. It depends on Zn(2+) as a cofactor.

It localises to the cytoplasm. The catalysed reaction is RNA(n) + a ribonucleoside 5'-triphosphate = RNA(n+1) + diphosphate. DNA-dependent RNA polymerase (RNAP) catalyzes the transcription of DNA into RNA using the four ribonucleoside triphosphates as substrates. This Thermoplasma acidophilum (strain ATCC 25905 / DSM 1728 / JCM 9062 / NBRC 15155 / AMRC-C165) protein is DNA-directed RNA polymerase subunit Rpo10.